The following is a 381-amino-acid chain: cAMP-dependent protein kinase type I-alpha regulatory subunit (381 aa).

An N-acetylmethionine modification is found at Met-1. The residue at position 2 (Ala-2) is an N-acetylalanine; in cAMP-dependent protein kinase type I-alpha regulatory subunit, N-terminally processed. The dimerization and phosphorylation stretch occupies residues 2-136; that stretch reads ASGSMATSEE…ALAKAIEKNV (135 aa). Position 3 is a phosphoserine (Ser-3). The interval 73–96 is disordered; sequence IRTDSREDEISPPPPNPVVKGRRR. The residue at position 75 (Thr-75) is a Phosphothreonine. A phosphoserine mark is found at Ser-77 and Ser-83. The Pseudophosphorylation motif signature appears at 96 to 100; sequence RRGAI. Phosphoserine is present on Ser-101. 3',5'-cyclic AMP contacts are provided by residues 137 to 254, Glu-202, Arg-211, 255 to 381, Glu-326, and Arg-335; these read LFSH…SKVS and ILES…SLSV. Phosphoserine is present on Ser-258.

This sequence belongs to the cAMP-dependent kinase regulatory chain family. In terms of assembly, the inactive holoenzyme is composed of two regulatory chains and two catalytic chains. Activation by cAMP releases the two active catalytic monomers and the regulatory dimer. Interacts with PRKACA and PRKACB. PRKAR1A also interacts with RFC2; the complex may be involved in cell survival. Interacts with AKAP4. Interacts with RARA; the interaction occurs in the presence of cAMP or FSH and regulates RARA transcriptional activity. Interacts with the phosphorylated form of PJA2. Interacts with PRKX; regulates this cAMP-dependent protein kinase. Interacts with CBFA2T3. Interacts with smAKAP; this interaction may target PRKAR1A to the plasma membrane. Interacts with AICDA. In terms of processing, the pseudophosphorylation site binds to the substrate-binding region of the catalytic chain, resulting in the inhibition of its activity.

It is found in the cell membrane. Its function is as follows. Regulatory subunit of the cAMP-dependent protein kinases involved in cAMP signaling in cells. This chain is cAMP-dependent protein kinase type I-alpha regulatory subunit (Prkar1a), found in Mus musculus (Mouse).